Here is a 949-residue protein sequence, read N- to C-terminus: Serine/threonine-protein kinase KIPK2 (949 aa).

Disordered stretches follow at residues 79–116 (LETSASAGTSRSTSPSNKGAMKKPFPMGTPRSPRVGPS), 323–344 (TALSSGLKGKLDNFPGSGTEKS), 407–426 (STSTENHPPSNTSHTTDKNV), and 495–525 (SSEKFDFSLSSKNSLGDYSSSTSMSEESNLS). Residues 81–94 (TSASAGTSRSTSPS) show a composition bias toward low complexity. Composition is skewed to polar residues over residues 407–420 (STSTENHPPSNTSH) and 495–512 (SSEKFDFSLSSKNSLGDY). Residues 513 to 525 (SSSTSMSEESNLS) are compositionally biased toward low complexity. The Protein kinase domain occupies 559-898 (FNLLKKLGCG…AAEIKRHPFF (340 aa)). ATP is bound by residues 565-573 (LGCGDIGTV) and lysine 588. The Proton acceptor role is filled by aspartate 684.

It belongs to the protein kinase superfamily. Ser/Thr protein kinase family. In terms of assembly, interacts with KCBP, PERK8, PERK9, PERK10 and PERK13.

It catalyses the reaction L-seryl-[protein] + ATP = O-phospho-L-seryl-[protein] + ADP + H(+). The catalysed reaction is L-threonyl-[protein] + ATP = O-phospho-L-threonyl-[protein] + ADP + H(+). In terms of biological role, serine/threonine-protein kinase that could be involved in the negative regulation of root growth. In Arabidopsis thaliana (Mouse-ear cress), this protein is Serine/threonine-protein kinase KIPK2.